The primary structure comprises 481 residues: UDP-N-acetylmuramoyl-L-alanyl-D-glutamate--L-lysine ligase (481 aa).

Position 42 (serine 42) interacts with UDP-N-acetyl-alpha-D-muramoyl-L-alanyl-D-glutamate. 118 to 124 (GTKGKTT) is a binding site for ATP. UDP-N-acetyl-alpha-D-muramoyl-L-alanyl-D-glutamate is bound by residues glutamine 158, 160-161 (TT), serine 187, and arginine 195. The residue at position 229 (lysine 229) is an N6-carboxylysine. The L-lysine recognition motif signature appears at 404–407 (DDPN).

Belongs to the MurCDEF family. MurE subfamily. Carboxylation is probably crucial for Mg(2+) binding and, consequently, for the gamma-phosphate positioning of ATP.

Its subcellular location is the cytoplasm. It carries out the reaction UDP-N-acetyl-alpha-D-muramoyl-L-alanyl-D-glutamate + L-lysine + ATP = UDP-N-acetyl-alpha-D-muramoyl-L-alanyl-gamma-D-glutamyl-L-lysine + ADP + phosphate + H(+). It participates in cell wall biogenesis; peptidoglycan biosynthesis. Catalyzes the addition of L-lysine to the nucleotide precursor UDP-N-acetylmuramoyl-L-alanyl-D-glutamate (UMAG) in the biosynthesis of bacterial cell-wall peptidoglycan. The polypeptide is UDP-N-acetylmuramoyl-L-alanyl-D-glutamate--L-lysine ligase (Streptococcus pyogenes serotype M4 (strain MGAS10750)).